A 357-amino-acid chain; its full sequence is MPYIGSLKVNQFRNLADVDITPHSQFNFFFGQNGAGKTSILESIYYLSVGRSFRTHLPQRLIQDNTDRFLIFITLYNGTQFIPLGVERDCQGDRCLRINGETASSWSLAAKRLPLCSLSAMSHRFLLDGPRVRRQFLDWLMFHVEPSFFSIWQRLQRSLKQRNASLKAKLPLGEITHWDKMLVEDGERLHQLRQNIVTEFKPLFTQMLQQFLPAYPLIGHYFRGWSEKYSLMEQLQINLKQDLQRGYTQAGPQRADFRLTLRDLPAQDILSQGQQKLVTYALHFAQGLLLKEKTGISPIYLIDDLPAELDANKRDCVIDLVNCLESQVFISGIDPNEIRLPPHSTLFHVKHGKVAAL.

Residue 31-38 (GQNGAGKT) participates in ATP binding.

The protein belongs to the RecF family.

Its subcellular location is the cytoplasm. Functionally, the RecF protein is involved in DNA metabolism; it is required for DNA replication and normal SOS inducibility. RecF binds preferentially to single-stranded, linear DNA. It also seems to bind ATP. The sequence is that of DNA replication and repair protein RecF from Coxiella burnetii (strain CbuK_Q154) (Coxiella burnetii (strain Q154)).